A 595-amino-acid polypeptide reads, in one-letter code: Aspartate--tRNA(Asp/Asn) ligase (595 aa).

Glu175 is an L-aspartate binding site. An aspartate region spans residues 199–202 (QQYK). L-aspartate contacts are provided by Arg221 and His454. 221–223 (RDE) serves as a coordination point for ATP. Glu488 contacts ATP. Position 495 (Arg495) interacts with L-aspartate. 540-543 (GIDR) contributes to the ATP binding site.

Belongs to the class-II aminoacyl-tRNA synthetase family. Type 1 subfamily. Homodimer.

It localises to the cytoplasm. The enzyme catalyses tRNA(Asx) + L-aspartate + ATP = L-aspartyl-tRNA(Asx) + AMP + diphosphate. Functionally, aspartyl-tRNA synthetase with relaxed tRNA specificity since it is able to aspartylate not only its cognate tRNA(Asp) but also tRNA(Asn). Reaction proceeds in two steps: L-aspartate is first activated by ATP to form Asp-AMP and then transferred to the acceptor end of tRNA(Asp/Asn). This chain is Aspartate--tRNA(Asp/Asn) ligase, found in Agrobacterium fabrum (strain C58 / ATCC 33970) (Agrobacterium tumefaciens (strain C58)).